Here is a 413-residue protein sequence, read N- to C-terminus: Tyrosine--tRNA ligase (413 aa).

Residues 55-64 (PTRPDLHLGH) carry the 'HIGH' region motif. The short motif at 242 to 246 (KMSKS) is the 'KMSKS' region element. K245 provides a ligand contact to ATP. An S4 RNA-binding domain is found at 346–410 (VKLSYILREC…GKKAFRRLVK (65 aa)).

The protein belongs to the class-I aminoacyl-tRNA synthetase family. TyrS type 2 subfamily. In terms of assembly, homodimer.

It is found in the cytoplasm. The catalysed reaction is tRNA(Tyr) + L-tyrosine + ATP = L-tyrosyl-tRNA(Tyr) + AMP + diphosphate + H(+). In terms of biological role, catalyzes the attachment of tyrosine to tRNA(Tyr) in a two-step reaction: tyrosine is first activated by ATP to form Tyr-AMP and then transferred to the acceptor end of tRNA(Tyr). The chain is Tyrosine--tRNA ligase from Synechococcus sp. (strain JA-2-3B'a(2-13)) (Cyanobacteria bacterium Yellowstone B-Prime).